Here is a 474-residue protein sequence, read N- to C-terminus: MFQAILAIIPILWLILSLAVFRMRGDLACFIGLIITLLTSIIGFHFSIKDGLTAGLEGAMMGFWPIIYIIVAAVFTYNLTTASGGMTVIKRLLMTITEDKRILVLILAWGFGGFLEAIAGFGTAVAIPASILVALGMKPLRAALICLIANTTPTAFGAIGLPVTTLAQVTGLEVKQLSVIVSLQLFILIVAIPFVLVSLTGEGKRPIKGVFGITLASGLAFALPQILVSNYVGAELPSIIGSLFCILVTILFVNLRERGKNASPVGGDVAFKEGIIRCLPFILVFFFIMLTSSLFPAINQLLAKVSTTVSIYTGEHAKPYTIKWLTSPGTMIILATFIAGLIQGMSFKEIGSILAKVLNKLTKTMVTVASIVALSKVMSYSGMINTIAVSLVAVTGGFYPFIAPVIGTLGTFITGSDTSANVLFGELQVKAANNLNMNPYWMAAQYDRGNCRKNDFASKHCSCSGTYWFRRSRR.

A run of 11 helical transmembrane segments spans residues 4–21 (AILA…LAVF), 28–48 (ACFI…HFSI), 63–85 (FWPI…ASGG), 105–127 (LILA…AVAI), 142–164 (AALI…LPVT), 177–199 (LSVI…LVSL), 209–231 (GVFG…VSNY), 238–255 (SIIG…FVNL), 281–303 (FILV…QLLA), 324–346 (WLTS…QGMS), and 387–409 (IAVS…IGTL).

This sequence belongs to the lactate permease family.

The protein localises to the cell membrane. Plays a role in L-lactate utilization. In Streptococcus iniae (Streptococcus shiloi), this protein is L-lactate permease (lctP).